Reading from the N-terminus, the 250-residue chain is 3-deoxy-manno-octulosonate cytidylyltransferase (250 aa).

This sequence belongs to the KdsB family.

The protein localises to the cytoplasm. It carries out the reaction 3-deoxy-alpha-D-manno-oct-2-ulosonate + CTP = CMP-3-deoxy-beta-D-manno-octulosonate + diphosphate. It participates in nucleotide-sugar biosynthesis; CMP-3-deoxy-D-manno-octulosonate biosynthesis; CMP-3-deoxy-D-manno-octulosonate from 3-deoxy-D-manno-octulosonate and CTP: step 1/1. The protein operates within bacterial outer membrane biogenesis; lipopolysaccharide biosynthesis. Functionally, activates KDO (a required 8-carbon sugar) for incorporation into bacterial lipopolysaccharide in Gram-negative bacteria. The protein is 3-deoxy-manno-octulosonate cytidylyltransferase of Rhizobium meliloti (strain 1021) (Ensifer meliloti).